Here is a 345-residue protein sequence, read N- to C-terminus: Myb/SANT-like DNA-binding domain-containing protein 4 (345 aa).

The region spanning 4-77 is the Myb-like domain; that stretch reads LKRKRKSNFS…EVKRRYLDWR (74 aa). K9 participates in a covalent cross-link: Glycyl lysine isopeptide (Lys-Gly) (interchain with G-Cter in SUMO2). Residue S106 is modified to Phosphoserine. Residues K114 and K142 each participate in a glycyl lysine isopeptide (Lys-Gly) (interchain with G-Cter in SUMO2) cross-link. Residues 141–160 are disordered; sequence VKVEEEERDPQSPEFEIEEE. Residue T188 is modified to Phosphothreonine. A coiled-coil region spans residues 203–345; sequence LLVNIEKQKL…LRIQKEGHLQ (143 aa). Glycyl lysine isopeptide (Lys-Gly) (interchain with G-Cter in SUMO2) cross-links involve residues K237, K254, and K273.

This is Myb/SANT-like DNA-binding domain-containing protein 4 (MSANTD4) from Bos taurus (Bovine).